Consider the following 152-residue polypeptide: Transcriptional repressor NrdR (152 aa).

A zinc finger lies at 3–34 (CPKCGSLNDKVVDTRQSKDGTVIRRRRECLDC). In terms of domain architecture, ATP-cone spans 49-139 (IVVKKKNGTT…VYNEFQDIKD (91 aa)).

The protein belongs to the NrdR family. It depends on Zn(2+) as a cofactor.

Its function is as follows. Negatively regulates transcription of bacterial ribonucleotide reductase nrd genes and operons by binding to NrdR-boxes. The sequence is that of Transcriptional repressor NrdR from Persephonella marina (strain DSM 14350 / EX-H1).